A 304-amino-acid polypeptide reads, in one-letter code: HPr kinase/phosphorylase (304 aa).

Active-site residues include His-136 and Lys-157. 151 to 158 (GESGIGKS) is a binding site for ATP. Residue Ser-158 participates in Mg(2+) binding. Asp-175 (proton acceptor; for phosphorylation activity. Proton donor; for dephosphorylation activity) is an active-site residue. The segment at 198–207 (LEVRGIGIID) is important for the catalytic mechanism of both phosphorylation and dephosphorylation. Residue Glu-199 participates in Mg(2+) binding. Arg-240 is a catalytic residue. The tract at residues 261 to 266 (PVRPGR) is important for the catalytic mechanism of dephosphorylation.

Belongs to the HPrK/P family. Homohexamer. The cofactor is Mg(2+).

The catalysed reaction is [HPr protein]-L-serine + ATP = [HPr protein]-O-phospho-L-serine + ADP + H(+). It catalyses the reaction [HPr protein]-O-phospho-L-serine + phosphate + H(+) = [HPr protein]-L-serine + diphosphate. Its function is as follows. Catalyzes the ATP- as well as the pyrophosphate-dependent phosphorylation of a specific serine residue in HPr, a phosphocarrier protein of the phosphoenolpyruvate-dependent sugar phosphotransferase system (PTS). HprK/P also catalyzes the pyrophosphate-producing, inorganic phosphate-dependent dephosphorylation (phosphorolysis) of seryl-phosphorylated HPr (P-Ser-HPr). The two antagonistic activities of HprK/P are regulated by several intracellular metabolites, which change their concentration in response to the absence or presence of rapidly metabolisable carbon sources (glucose, fructose, etc.) in the growth medium. Therefore, by controlling the phosphorylation state of HPr, HPrK/P is a sensor enzyme that plays a major role in the regulation of carbon metabolism and sugar transport: it mediates carbon catabolite repression (CCR), and regulates PTS-catalyzed carbohydrate uptake and inducer exclusion. The polypeptide is HPr kinase/phosphorylase (Clostridium botulinum (strain Eklund 17B / Type B)).